The primary structure comprises 120 residues: MGLEKQTLRMGNGKDHPQPGDPVELNYTGYLYDESNPDHHKGKEFDSSKRRGPLKATIGAGDVIRGWDEGVRQMSLGEKAILTMSGEYAYGEKGFPGLIPPNASLVFEVELLKIKDHGLD.

Residues 1–26 (MGLEKQTLRMGNGKDHPQPGDPVELN) are disordered. A PPIase FKBP-type domain is found at 20–115 (GDPVELNYTG…VFEVELLKIK (96 aa)).

The protein belongs to the FKBP-type PPIase family. FKBP1 subfamily.

The enzyme catalyses [protein]-peptidylproline (omega=180) = [protein]-peptidylproline (omega=0). Its activity is regulated as follows. Inhibited by both FK506 and rapamycin. PPIases accelerate the folding of proteins. It catalyzes the cis-trans isomerization of proline imidic peptide bonds in oligopeptides. The chain is FK506-binding protein 1B (fpr1B) from Aspergillus fumigatus (strain ATCC MYA-4609 / CBS 101355 / FGSC A1100 / Af293) (Neosartorya fumigata).